The following is a 286-amino-acid chain: Pyridoxal kinase PdxY (286 aa).

Substrate contacts are provided by residues Ser-9 and Thr-44 to Gln-45. 3 residues coordinate ATP: Asp-111, Glu-148, and Lys-181. Substrate is bound at residue Asp-222.

This sequence belongs to the pyridoxine kinase family. PdxY subfamily. Homodimer. Requires Mg(2+) as cofactor.

It carries out the reaction pyridoxal + ATP = pyridoxal 5'-phosphate + ADP + H(+). It participates in cofactor metabolism; pyridoxal 5'-phosphate salvage; pyridoxal 5'-phosphate from pyridoxal: step 1/1. Its function is as follows. Pyridoxal kinase involved in the salvage pathway of pyridoxal 5'-phosphate (PLP). Catalyzes the phosphorylation of pyridoxal to PLP. This is Pyridoxal kinase PdxY from Pasteurella multocida (strain Pm70).